The following is a 630-amino-acid chain: Polypeptide N-acetylgalactosaminyltransferase 5 (630 aa).

Residues 1–20 are Cytoplasmic-facing; sequence MTFSTFTRKMRGRMRSNTCR. Residues 21-38 form a helical; Signal-anchor for type II membrane protein membrane-spanning segment; sequence IVLLTSLVWVIFDFVLIA. Topologically, residues 39-630 are lumenal; that stretch reads RYSDCIGKDG…MESKFKWQAH (592 aa). Residue Asn-166 is glycosylated (N-linked (GlcNAc...) asparagine). 5 disulfide bridges follow: Cys-177–Cys-410, Cys-401–Cys-479, Cys-513–Cys-530, Cys-553–Cys-568, and Cys-594–Cys-611. Residues 186-296 form a catalytic subdomain A region; sequence LPTTSIVIVF…EGWLEPLLAR (111 aa). Substrate is bound by residues Asp-227 and Arg-257. 2 residues coordinate Mn(2+): Asp-280 and His-282. Positions 356–418 are catalytic subdomain B; the sequence is PLRTPTMAGG…PCSHVGHVFR (63 aa). Residue Trp-387 participates in substrate binding. Residue His-415 participates in Mn(2+) binding. Residues Arg-418 and Tyr-423 each coordinate substrate. The 123-residue stretch at 500–622 folds into the Ricin B-type lectin domain; the sequence is YYLGEIRNAE…YGKGQQWLME (123 aa).

It belongs to the glycosyltransferase 2 family. GalNAc-T subfamily. The cofactor is Mn(2+). In terms of tissue distribution, expressed during oogenesis, in the somatically derived follicle cells that surround the developing oocyte, which are involved in the maturation of the oocyte and construction of the egg shell, as well as playing a role in subsequent embryonic pattern formation. During embryonic stages 9-11, expressed in the primordium of the foregut, midgut and hindgut. Expressed in salivary glands from embryonic stage 12 onwards. During embryonic stages 12-13, expressed in the posterior midgut and hindgut. During embryonic stages 14-17, expressed in the hindgut and the posterior spiracles. Expression is also detected in the epidermis and antennomaxillary complex at embryonic stages 16-17. In third instar larvae, ubiquitously expressed in wing, eye-antennal, leg and haltere imaginal disks.

The protein localises to the golgi apparatus membrane. It catalyses the reaction L-seryl-[protein] + UDP-N-acetyl-alpha-D-galactosamine = a 3-O-[N-acetyl-alpha-D-galactosaminyl]-L-seryl-[protein] + UDP + H(+). The enzyme catalyses L-threonyl-[protein] + UDP-N-acetyl-alpha-D-galactosamine = a 3-O-[N-acetyl-alpha-D-galactosaminyl]-L-threonyl-[protein] + UDP + H(+). It participates in protein modification; protein glycosylation. Functionally, catalyzes the initial reaction in O-linked oligosaccharide biosynthesis, the transfer of an N-acetyl-D-galactosamine residue to a serine or threonine residue on the protein receptor. It can both act as a peptide transferase that transfers GalNAc onto unmodified peptide substrates, and as a glycopeptide transferase that requires the prior addition of a GalNAc on a peptide before adding additional GalNAc moieties. Prefers EA2 as substrate. In the larval midgut, required for O-glycosylation of apical and luminal proteins within copper cells enabling proper gut acidification. This is Polypeptide N-acetylgalactosaminyltransferase 5 from Drosophila melanogaster (Fruit fly).